The primary structure comprises 294 residues: Ribosomal RNA small subunit methyltransferase A (294 aa).

S-adenosyl-L-methionine contacts are provided by Asn31, Leu33, Gly58, Glu79, Asp111, and Asn136.

It belongs to the class I-like SAM-binding methyltransferase superfamily. rRNA adenine N(6)-methyltransferase family. RsmA subfamily.

It is found in the cytoplasm. It catalyses the reaction adenosine(1518)/adenosine(1519) in 16S rRNA + 4 S-adenosyl-L-methionine = N(6)-dimethyladenosine(1518)/N(6)-dimethyladenosine(1519) in 16S rRNA + 4 S-adenosyl-L-homocysteine + 4 H(+). Functionally, specifically dimethylates two adjacent adenosines (A1518 and A1519) in the loop of a conserved hairpin near the 3'-end of 16S rRNA in the 30S particle. May play a critical role in biogenesis of 30S subunits. This is Ribosomal RNA small subunit methyltransferase A from Lactobacillus acidophilus (strain ATCC 700396 / NCK56 / N2 / NCFM).